We begin with the raw amino-acid sequence, 190 residues long: Peptidyl-tRNA hydrolase (190 aa).

Residue tyrosine 17 coordinates tRNA. Catalysis depends on histidine 22, which acts as the Proton acceptor. Residues tyrosine 67 and asparagine 69 each coordinate tRNA.

The protein belongs to the PTH family. Monomer.

The protein localises to the cytoplasm. The enzyme catalyses an N-acyl-L-alpha-aminoacyl-tRNA + H2O = an N-acyl-L-amino acid + a tRNA + H(+). Functionally, hydrolyzes ribosome-free peptidyl-tRNAs (with 1 or more amino acids incorporated), which drop off the ribosome during protein synthesis, or as a result of ribosome stalling. Its function is as follows. Catalyzes the release of premature peptidyl moieties from peptidyl-tRNA molecules trapped in stalled 50S ribosomal subunits, and thus maintains levels of free tRNAs and 50S ribosomes. The sequence is that of Peptidyl-tRNA hydrolase from Moorella thermoacetica (strain ATCC 39073 / JCM 9320).